Reading from the N-terminus, the 104-residue chain is PLAT domain-containing protein 3 (104 aa).

The PLAT domain maps to 1–104; that stretch reads MSLRLYDSYG…LARDASPYEL (104 aa).

In Arabidopsis thaliana (Mouse-ear cress), this protein is PLAT domain-containing protein 3.